A 129-amino-acid polypeptide reads, in one-letter code: Small ribosomal subunit protein uS11 (129 aa).

It belongs to the universal ribosomal protein uS11 family. Part of the 30S ribosomal subunit. Interacts with proteins S7 and S18. Binds to IF-3.

In terms of biological role, located on the platform of the 30S subunit, it bridges several disparate RNA helices of the 16S rRNA. Forms part of the Shine-Dalgarno cleft in the 70S ribosome. This chain is Small ribosomal subunit protein uS11, found in Bradyrhizobium sp. (strain ORS 278).